The chain runs to 123 residues: Putative iron-sulfur cluster insertion protein ErpA (123 aa).

Positions 51, 115, and 117 each coordinate iron-sulfur cluster.

Belongs to the HesB/IscA family. As to quaternary structure, homodimer. Iron-sulfur cluster serves as cofactor.

Required for insertion of 4Fe-4S clusters. This Burkholderia multivorans (strain ATCC 17616 / 249) protein is Putative iron-sulfur cluster insertion protein ErpA.